Consider the following 264-residue polypeptide: MNEQFIQFPQIDPIIFSIGPIALRWYGLMYLIGFGFAYWLGMRRAKNSNGVWTTEQVDQLIYTCFWGVILGGRIGDVFFYNFDRLLQDPMFLFRIWEGGMSFHGGLIGVIVAMIWVSFRQKRSFWNTADFIAPLIPFGLGMGRIGNFINDELWGRITDVPWAVLFPSGGYLPRHPSQLYEFFLEGVVLFFILNWFIKKPRPAGSVAGLFLIGYGVFRFLVEYVRDIDPNVNTVDDLITRGQLLSLPMIIGGLAIMIWAYSRKKA.

A run of 7 helical transmembrane segments spans residues 14 to 34, 60 to 80, 98 to 118, 128 to 148, 176 to 196, 203 to 223, and 240 to 260; these read IIFS…LIGF, LIYT…VFFY, GGMS…WVSF, ADFI…GNFI, SQLY…NWFI, GSVA…VEYV, and GQLL…WAYS. Position 143 (R143) interacts with a 1,2-diacyl-sn-glycero-3-phospho-(1'-sn-glycerol).

This sequence belongs to the Lgt family.

It localises to the cell inner membrane. It catalyses the reaction L-cysteinyl-[prolipoprotein] + a 1,2-diacyl-sn-glycero-3-phospho-(1'-sn-glycerol) = an S-1,2-diacyl-sn-glyceryl-L-cysteinyl-[prolipoprotein] + sn-glycerol 1-phosphate + H(+). Its pathway is protein modification; lipoprotein biosynthesis (diacylglyceryl transfer). Its function is as follows. Catalyzes the transfer of the diacylglyceryl group from phosphatidylglycerol to the sulfhydryl group of the N-terminal cysteine of a prolipoprotein, the first step in the formation of mature lipoproteins. The sequence is that of Phosphatidylglycerol--prolipoprotein diacylglyceryl transferase from Actinobacillus pleuropneumoniae serotype 7 (strain AP76).